Reading from the N-terminus, the 148-residue chain is Large ribosomal subunit protein bL9 (148 aa).

It belongs to the bacterial ribosomal protein bL9 family.

Functionally, binds to the 23S rRNA. The chain is Large ribosomal subunit protein bL9 from Bacillus cereus (strain B4264).